Here is a 102-residue protein sequence, read N- to C-terminus: Small ribosomal subunit protein bS6 (102 aa).

Belongs to the bacterial ribosomal protein bS6 family.

In terms of biological role, binds together with bS18 to 16S ribosomal RNA. This Deinococcus deserti (strain DSM 17065 / CIP 109153 / LMG 22923 / VCD115) protein is Small ribosomal subunit protein bS6.